The chain runs to 125 residues: Large-conductance mechanosensitive channel (125 aa).

The next 3 membrane-spanning stretches (helical) occupy residues 19–39 (VGVI…SNLI), 42–62 (LIGI…IGSA), and 67–87 (GSFL…FLMV).

The protein belongs to the MscL family. As to quaternary structure, homopentamer.

The protein localises to the cell membrane. Its function is as follows. Channel that opens in response to stretch forces in the membrane lipid bilayer. May participate in the regulation of osmotic pressure changes within the cell. This is Large-conductance mechanosensitive channel from Limosilactobacillus fermentum (strain NBRC 3956 / LMG 18251) (Lactobacillus fermentum).